Here is a 241-residue protein sequence, read N- to C-terminus: ATP synthase subunit a (241 aa).

The next 5 membrane-spanning stretches (helical) occupy residues 21–41 (LASI…AIAC), 84–104 (VTLI…AIVI), 116–136 (DATV…YYGI), 183–203 (ILIG…WIIG), and 207–227 (LIAW…IFIM).

The protein belongs to the ATPase A chain family. As to quaternary structure, F-type ATPases have 2 components, CF(1) - the catalytic core - and CF(0) - the membrane proton channel. CF(1) has five subunits: alpha(3), beta(3), gamma(1), delta(1), epsilon(1). CF(0) has three main subunits: a(1), b(2) and c(9-12). The alpha and beta chains form an alternating ring which encloses part of the gamma chain. CF(1) is attached to CF(0) by a central stalk formed by the gamma and epsilon chains, while a peripheral stalk is formed by the delta and b chains.

The protein localises to the cell membrane. In terms of biological role, key component of the proton channel; it plays a direct role in the translocation of protons across the membrane. In Staphylococcus carnosus (strain TM300), this protein is ATP synthase subunit a.